Reading from the N-terminus, the 431-residue chain is Tol-Pal system protein TolB (431 aa).

The signal sequence occupies residues 1-26; the sequence is MRLMTKLGFRALVASCLIAAGAAANA. The tract at residues 411–431 is disordered; it reads PQILSVQGGSVREPSWGPFMQ.

It belongs to the TolB family. As to quaternary structure, the Tol-Pal system is composed of five core proteins: the inner membrane proteins TolA, TolQ and TolR, the periplasmic protein TolB and the outer membrane protein Pal. They form a network linking the inner and outer membranes and the peptidoglycan layer.

It localises to the periplasm. Functionally, part of the Tol-Pal system, which plays a role in outer membrane invagination during cell division and is important for maintaining outer membrane integrity. The sequence is that of Tol-Pal system protein TolB from Burkholderia ambifaria (strain ATCC BAA-244 / DSM 16087 / CCUG 44356 / LMG 19182 / AMMD) (Burkholderia cepacia (strain AMMD)).